The following is a 333-amino-acid chain: DNA-directed RNA polymerase subunit alpha (333 aa).

Residues 1 to 234 (MQISVNEFLT…QQLAAFVDLK (234 aa)) form an alpha N-terminal domain (alpha-NTD) region. Residues 248-333 (IDPILLRPVD…SLKKDDKATA (86 aa)) are alpha C-terminal domain (alpha-CTD).

Belongs to the RNA polymerase alpha chain family. In terms of assembly, homodimer. The RNAP catalytic core consists of 2 alpha, 1 beta, 1 beta' and 1 omega subunit. When a sigma factor is associated with the core the holoenzyme is formed, which can initiate transcription.

The enzyme catalyses RNA(n) + a ribonucleoside 5'-triphosphate = RNA(n+1) + diphosphate. Its function is as follows. DNA-dependent RNA polymerase catalyzes the transcription of DNA into RNA using the four ribonucleoside triphosphates as substrates. The polypeptide is DNA-directed RNA polymerase subunit alpha (Pseudomonas fluorescens (strain Pf0-1)).